The primary structure comprises 404 residues: Glucose-1-phosphate adenylyltransferase (404 aa).

Alpha-D-glucose 1-phosphate is bound by residues Tyr-99, Gly-164, 179 to 180, and Ser-197; that span reads EK.

The protein belongs to the bacterial/plant glucose-1-phosphate adenylyltransferase family. As to quaternary structure, homotetramer.

It catalyses the reaction alpha-D-glucose 1-phosphate + ATP + H(+) = ADP-alpha-D-glucose + diphosphate. Its pathway is glycan biosynthesis; glycogen biosynthesis. Functionally, involved in the biosynthesis of ADP-glucose, a building block required for the elongation reactions to produce glycogen. Catalyzes the reaction between ATP and alpha-D-glucose 1-phosphate (G1P) to produce pyrophosphate and ADP-Glc. The chain is Glucose-1-phosphate adenylyltransferase from Nocardia farcinica (strain IFM 10152).